Here is a 115-residue protein sequence, read N- to C-terminus: Phosphoribosyl-AMP cyclohydrolase (115 aa).

Asp80 lines the Mg(2+) pocket. Cys81 contributes to the Zn(2+) binding site. Mg(2+) is bound by residues Asp82 and Asp84. Cys97 and Cys104 together coordinate Zn(2+).

Belongs to the PRA-CH family. Homodimer. The cofactor is Mg(2+). It depends on Zn(2+) as a cofactor.

It localises to the cytoplasm. The enzyme catalyses 1-(5-phospho-beta-D-ribosyl)-5'-AMP + H2O = 1-(5-phospho-beta-D-ribosyl)-5-[(5-phospho-beta-D-ribosylamino)methylideneamino]imidazole-4-carboxamide. It functions in the pathway amino-acid biosynthesis; L-histidine biosynthesis; L-histidine from 5-phospho-alpha-D-ribose 1-diphosphate: step 3/9. Catalyzes the hydrolysis of the adenine ring of phosphoribosyl-AMP. In Mycobacterium bovis (strain ATCC BAA-935 / AF2122/97), this protein is Phosphoribosyl-AMP cyclohydrolase.